The primary structure comprises 413 residues: Interferon-inducible GTPase 1 (413 aa).

Residue G2 is the site of N-myristoyl glycine attachment. Residues 68 to 250 form the IRG-type G domain; it reads SVLNVAVTGE…PVLMDKLISD (183 aa). Residues G79, G81, K82, S83, S84, T102, and G103 each contribute to the GDP site. T102 bears the (Microbial infection) Phosphothreonine; by ROP18 mark. The residue at position 108 (T108) is a (Microbial infection) Phosphothreonine; by ROP18. Residues K184, D186, S187, and N232 each coordinate GDP. Residues C236 and C410 are joined by a disulfide bond.

It belongs to the TRAFAC class dynamin-like GTPase superfamily. IRG family. Monomer, as apoenzyme and in the GDP-bound form. Homooligomer, upon GTP binding. Interacts with HOOK3. In terms of assembly, (Microbial infection) Interacts with Toxoplasma gondii GRA7 in GTP-dependent manner; the interaction results in faster turnover of the GTP-activated IIGP1 oligomer. Interacts with T.gondii ROP5; the interaction results in inhibition of IRGA6/IIGP1 GTPase activity and oligomerization. Myristoylated. In terms of processing, (Microbial infection) Phosphorylated by Toxoplasma gondii ROP18 from virulent strains.

It is found in the cytoplasm. Its subcellular location is the nucleus membrane. The protein resides in the endoplasmic reticulum membrane. It localises to the golgi apparatus. The protein localises to the golgi stack membrane. It is found in the parasitophorous vacuole membrane. It catalyses the reaction GTP + H2O = GDP + phosphate + H(+). Its function is as follows. GTPase with low activity. Has higher affinity for GDP than for GTP. Plays a role in resistance to intracellular pathogens. During infection with avirulent Toxoplasma gondii strains, recruited to the parasitophorous vacuole membrane. Required for disruption of the parasitophorous vacuole formed following T.gondii infection and subsequent killing of the parasite. Mediates resistance to Chlamydia trachomatis infection by targeting bacterial inclusions to autophagosomes for subsequent lysosomal destruction. The polypeptide is Interferon-inducible GTPase 1 (Iigp1) (Mus musculus (Mouse)).